Reading from the N-terminus, the 403-residue chain is Phosphopentomutase (403 aa).

Asp13, Asp298, His303, Asp339, His340, and His351 together coordinate Mn(2+).

This sequence belongs to the phosphopentomutase family. Mn(2+) is required as a cofactor.

It is found in the cytoplasm. It carries out the reaction 2-deoxy-alpha-D-ribose 1-phosphate = 2-deoxy-D-ribose 5-phosphate. It catalyses the reaction alpha-D-ribose 1-phosphate = D-ribose 5-phosphate. The protein operates within carbohydrate degradation; 2-deoxy-D-ribose 1-phosphate degradation; D-glyceraldehyde 3-phosphate and acetaldehyde from 2-deoxy-alpha-D-ribose 1-phosphate: step 1/2. Functionally, isomerase that catalyzes the conversion of deoxy-ribose 1-phosphate (dRib-1-P) and ribose 1-phosphate (Rib-1-P) to deoxy-ribose 5-phosphate (dRib-5-P) and ribose 5-phosphate (Rib-5-P), respectively. The sequence is that of Phosphopentomutase from Streptococcus pyogenes serotype M4 (strain MGAS10750).